The chain runs to 381 residues: tRNA pseudouridine synthase D (381 aa).

D81 functions as the Nucleophile in the catalytic mechanism. A TRUD domain is found at 160 to 335; the sequence is GMPNYFGPQR…TLGSRRFFWV (176 aa).

It belongs to the pseudouridine synthase TruD family.

The catalysed reaction is uridine(13) in tRNA = pseudouridine(13) in tRNA. Responsible for synthesis of pseudouridine from uracil-13 in transfer RNAs. In Helicobacter pylori (strain Shi470), this protein is tRNA pseudouridine synthase D.